Reading from the N-terminus, the 305-residue chain is tRNA dimethylallyltransferase (305 aa).

9-16 (GPTGAGKT) is an ATP binding site. Residue 11–16 (TGAGKT) coordinates substrate. Interaction with substrate tRNA regions lie at residues 34–37 (DSRQ) and 158–162 (QRIVR).

It belongs to the IPP transferase family. Monomer. It depends on Mg(2+) as a cofactor.

It carries out the reaction adenosine(37) in tRNA + dimethylallyl diphosphate = N(6)-dimethylallyladenosine(37) in tRNA + diphosphate. In terms of biological role, catalyzes the transfer of a dimethylallyl group onto the adenine at position 37 in tRNAs that read codons beginning with uridine, leading to the formation of N6-(dimethylallyl)adenosine (i(6)A). The protein is tRNA dimethylallyltransferase of Oleidesulfovibrio alaskensis (strain ATCC BAA-1058 / DSM 17464 / G20) (Desulfovibrio alaskensis).